The sequence spans 136 residues: Protein PsiE (136 aa).

4 consecutive transmembrane segments (helical) span residues 15–35 (ILQN…VLFL), 55–75 (YELV…ALIV), 82–102 (FHFP…RLII), and 108–128 (PMDV…LWLC).

This sequence belongs to the PsiE family.

Its subcellular location is the cell inner membrane. This chain is Protein PsiE, found in Salmonella arizonae (strain ATCC BAA-731 / CDC346-86 / RSK2980).